The chain runs to 81 residues: Large ribosomal subunit protein bL31B (81 aa).

Belongs to the bacterial ribosomal protein bL31 family. Type B subfamily. As to quaternary structure, part of the 50S ribosomal subunit.

The chain is Large ribosomal subunit protein bL31B from Borreliella burgdorferi (strain ATCC 35210 / DSM 4680 / CIP 102532 / B31) (Borrelia burgdorferi).